A 783-amino-acid chain; its full sequence is Isoamylase 1, chloroplastic (783 aa).

Residues 1 to 43 (MDAIKCSSSFLHHTKLNTLFSNHTFPKISAPNFKPLFRPISIS) constitute a chloroplast transit peptide. The Nucleophile role is filled by Asp-410. Glu-466 serves as the catalytic Proton donor.

It belongs to the glycosyl hydrolase 13 family. In terms of assembly, associates with ISA2 to form the heteromultimeric complex Iso1 required for amylopectin synthesis.

The protein resides in the plastid. It is found in the chloroplast. It carries out the reaction Hydrolysis of (1-&gt;6)-alpha-D-glucosidic branch linkages in glycogen, amylopectin and their beta-limit dextrins.. It participates in glycan biosynthesis; starch biosynthesis. Involved in the trimming of pre-amylopectin chains. Accelerates the crystallization of nascent amylopectin molecules during starch synthesis. ISA1 and ISA2 work exclusively together as a multimeric holoenzyme. ISA1-ISA2 removes preferentially branches that are very close to other branches. Promotes negative gravitropic responses in shoots by facilitating starch granules (statoliths) formation in hypocotyls. The polypeptide is Isoamylase 1, chloroplastic (Arabidopsis thaliana (Mouse-ear cress)).